We begin with the raw amino-acid sequence, 384 residues long: Histone acetyltransferase type B subunit 2 (384 aa).

WD repeat units follow at residues 156–196 (GHSA…SSIS), 203–243 (RHET…CIHA), 247–287 (AHTS…QPLH), 291–331 (GHSK…AEVP), and 348–384 (GHTSTVCDISWNPAEPFEIASVSEDNILQIWQMPQPE).

It belongs to the WD repeat RBAP46/RBAP48/MSI1 family. Component of the HAT-B complex.

It is found in the cytoplasm. The protein localises to the nucleus. Regulatory subunit of the histone acetylase B (HAT-B) complex. The complex acetylates histone H4 which is required for telomeric silencing. In Encephalitozoon cuniculi (strain GB-M1) (Microsporidian parasite), this protein is Histone acetyltransferase type B subunit 2 (HAT2).